Here is a 1005-residue protein sequence, read N- to C-terminus: Regulator of telomere elongation helicase 1 homolog (1005 aa).

Positions 7–322 (AGIPVHFPFE…KEMLLELEKA (316 aa)) constitute a Helicase ATP-binding domain. Position 42–49 (42–49 (SPTGTGKT)) interacts with ATP. [4Fe-4S] cluster-binding residues include Cys145, Cys163, Cys172, and Cys208. The short motif at 251–254 (DEAH) is the DEAH box element. At Thr876 the chain carries Phosphothreonine. Residues 893–917 (NGPLKTEPSEPATTSSSFCPTPAQS) are disordered.

It belongs to the helicase family. RAD3/XPD subfamily.

The protein resides in the nucleus. The enzyme catalyses ATP + H2O = ADP + phosphate + H(+). Its function is as follows. A probable ATP-dependent DNA helicase implicated in DNA repair and the maintenance of genomic stability. Acts as an anti-recombinase to counteract toxic recombination and limit crossover during meiosis. Regulates meiotic recombination and crossover homeostasis by physically dissociating strand invasion events and thereby promotes noncrossover repair by meiotic synthesis dependent strand annealing (SDSA) as well as disassembly of D loop recombination intermediates. This is Regulator of telomere elongation helicase 1 homolog from Drosophila virilis (Fruit fly).